We begin with the raw amino-acid sequence, 177 residues long: Archaemetzincin (177 aa).

Zn(2+) is bound at residue H129. The active-site Proton acceptor is E130. Positions 133, 139, 140, 145, 164, and 167 each coordinate Zn(2+).

This sequence belongs to the peptidase M54 family. Monomer. Zn(2+) serves as cofactor.

In terms of biological role, probable zinc metalloprotease whose natural substrate is unknown. This is Archaemetzincin from Sulfolobus acidocaldarius (strain ATCC 33909 / DSM 639 / JCM 8929 / NBRC 15157 / NCIMB 11770).